A 222-amino-acid polypeptide reads, in one-letter code: Alpha-S2-casein (222 aa).

An N-terminal signal peptide occupies residues 1-15 (MKFFIFTCLLAVALA). A phosphoserine mark is found at Ser-23, Ser-24, Ser-25, Ser-28, Ser-46, Ser-71, Ser-72, Ser-73, Ser-76, Ser-144, Ser-146, Ser-150, and Ser-158. A repeat spans 76 to 140 (SAEVATEEVK…AVPITPTLNR (65 aa)). Positions 158–222 (STEVFTKKTK…TKVIPYVRYL (65 aa)) form a repeat.

It belongs to the alpha-casein family. Mammary gland specific. Secreted in milk.

The protein resides in the secreted. Its function is as follows. Important role in the capacity of milk to transport calcium phosphate. Casocidin-I inhibits the growth of E.coli and S.carnosus. The polypeptide is Alpha-S2-casein (CSN1S2) (Bos taurus (Bovine)).